A 124-amino-acid chain; its full sequence is Small ribosomal subunit protein bS6 (124 aa).

Residues 96 to 124 (ETGPSPMMKEVQREEAKKAAAAQPTEAQA) are disordered. Positions 114-124 (AAAAQPTEAQA) are enriched in low complexity.

Belongs to the bacterial ribosomal protein bS6 family.

Functionally, binds together with bS18 to 16S ribosomal RNA. The chain is Small ribosomal subunit protein bS6 from Burkholderia vietnamiensis (strain G4 / LMG 22486) (Burkholderia cepacia (strain R1808)).